The chain runs to 315 residues: Heme oxygenase 2 (315 aa).

Positions M1–E15 are enriched in polar residues. The disordered stretch occupies residues M1–M29. The residue at position 2 (S2) is an N-acetylserine. A Phosphoserine modification is found at S2. The Cytoplasmic portion of the chain corresponds to S2–S294. Heme b contacts are provided by H44, Y153, K198, and R202. HRM repeat units lie at residues K263–A268 and N280–T285. An S-nitrosocysteine mark is found at C264 and C281. A helical; Anchor for type IV membrane protein transmembrane segment spans residues L295–M315.

It belongs to the heme oxygenase family. A soluble form arises by proteolytic removal of the membrane anchor. Post-translationally, S-nitrosylated by BLVRB. As to expression, widely distributed in body with a high concentration in the brain.

It is found in the microsome membrane. The protein localises to the endoplasmic reticulum membrane. It catalyses the reaction heme b + 3 reduced [NADPH--hemoprotein reductase] + 3 O2 = biliverdin IXalpha + CO + Fe(2+) + 3 oxidized [NADPH--hemoprotein reductase] + 3 H2O + H(+). With respect to regulation, inhibited by metalloporphyrins such as Sn- and Zn-protoporphyrins. Functionally, catalyzes the oxidative cleavage of heme at the alpha-methene bridge carbon, released as carbon monoxide (CO), to generate biliverdin IXalpha, while releasing the central heme iron chelate as ferrous iron. The protein is Heme oxygenase 2 (Hmox2) of Rattus norvegicus (Rat).